The following is a 388-amino-acid chain: tRNA (guanine-N(7)-)-methyltransferase (388 aa).

Glutamate 129, glutamate 154, and aspartate 181 together coordinate S-adenosyl-L-methionine. Substrate contacts are provided by lysine 207 and aspartate 237.

This sequence belongs to the class I-like SAM-binding methyltransferase superfamily. TrmB family.

The enzyme catalyses guanosine(46) in tRNA + S-adenosyl-L-methionine = N(7)-methylguanosine(46) in tRNA + S-adenosyl-L-homocysteine. It functions in the pathway tRNA modification; N(7)-methylguanine-tRNA biosynthesis. In terms of biological role, catalyzes the formation of N(7)-methylguanine at position 46 (m7G46) in tRNA. In Wolinella succinogenes (strain ATCC 29543 / DSM 1740 / CCUG 13145 / JCM 31913 / LMG 7466 / NCTC 11488 / FDC 602W) (Vibrio succinogenes), this protein is tRNA (guanine-N(7)-)-methyltransferase.